The following is a 554-amino-acid chain: Probable efflux pump gsfJ (554 aa).

Transmembrane regions (helical) follow at residues 54–74 (LAAV…DNTI), 93–115 (SWYG…GKFY), 120–140 (IKVW…ICAV), 152–172 (AIAG…IGFA), 181–201 (LLGF…LIGG), 206–226 (KCFY…FLLF), 248–268 (LVGA…LQYG), 279–299 (VIGL…WEIY), 321–341 (IYMF…PIYF), 349–369 (PIGS…AAIV), 379–399 (IVPL…GLFY), 410–430 (WVGY…IAMS), 447–467 (IVNF…QCAF), and 518–538 (VFAI…FGSW).

Belongs to the major facilitator superfamily.

It is found in the membrane. Its function is as follows. Probable efflux pump; part of the gene cluster that mediates the biosynthesis of griseofulvin. This chain is Probable efflux pump gsfJ, found in Penicillium aethiopicum.